A 232-amino-acid chain; its full sequence is MKSKLIILLTLVPFSSFSTGNNFEINKTRVIYSDSTPSVQISNNKAYPLIIQSNVWDESNNKNHDFIATPPIFKMESESRNIIKIIKTTINLPDSQESMRWLCIESMPPIEKSTKINRKEGRTDSINISIRGCIKLIYRPASVPSPVFNNIVEKLKWHKNGKYLVLKNNTPYYISFSEVFFDSDKVNNAKDILYVKPYSEKKIDISNRIIKKIKWAMIDDAGAKTKLYESIL.

The signal sequence occupies residues 1–20 (MKSKLIILLTLVPFSSFSTG).

It belongs to the periplasmic pilus chaperone family.

The protein resides in the periplasm. Functionally, involved in the biogenesis of the CS6 fimbria. In Escherichia coli, this protein is Chaperone protein CssC (cssC).